The sequence spans 86 residues: Exodeoxyribonuclease 7 small subunit (86 aa).

The protein belongs to the XseB family. In terms of assembly, heterooligomer composed of large and small subunits.

The protein resides in the cytoplasm. It carries out the reaction Exonucleolytic cleavage in either 5'- to 3'- or 3'- to 5'-direction to yield nucleoside 5'-phosphates.. Functionally, bidirectionally degrades single-stranded DNA into large acid-insoluble oligonucleotides, which are then degraded further into small acid-soluble oligonucleotides. This chain is Exodeoxyribonuclease 7 small subunit, found in Xanthomonas axonopodis pv. citri (strain 306).